A 186-amino-acid polypeptide reads, in one-letter code: Elongation factor P (186 aa).

It belongs to the elongation factor P family.

It localises to the cytoplasm. The protein operates within protein biosynthesis; polypeptide chain elongation. Its function is as follows. Involved in peptide bond synthesis. Stimulates efficient translation and peptide-bond synthesis on native or reconstituted 70S ribosomes in vitro. Probably functions indirectly by altering the affinity of the ribosome for aminoacyl-tRNA, thus increasing their reactivity as acceptors for peptidyl transferase. The sequence is that of Elongation factor P from Streptococcus mutans serotype c (strain ATCC 700610 / UA159).